The chain runs to 100 residues: NADH-quinone oxidoreductase subunit K (100 aa).

Transmembrane regions (helical) follow at residues 3-23 (PTAY…IGVL), 29-49 (IMIF…LVAF), and 63-83 (FIVM…IVAI).

Belongs to the complex I subunit 4L family. NDH-1 is composed of 15 different subunits. Subunits NuoA, H, J, K, L, M, N constitute the membrane sector of the complex.

The protein resides in the cell membrane. The enzyme catalyses a quinone + NADH + 5 H(+)(in) = a quinol + NAD(+) + 4 H(+)(out). Functionally, NDH-1 shuttles electrons from NADH, via FMN and iron-sulfur (Fe-S) centers, to quinones in the respiratory chain. The immediate electron acceptor for the enzyme in this species is believed to be a menaquinone. Couples the redox reaction to proton translocation (for every two electrons transferred, four hydrogen ions are translocated across the cytoplasmic membrane), and thus conserves the redox energy in a proton gradient. This chain is NADH-quinone oxidoreductase subunit K, found in Deinococcus geothermalis (strain DSM 11300 / CIP 105573 / AG-3a).